Reading from the N-terminus, the 287-residue chain is Putative sugar uptake protein M6_Spy1874 (287 aa).

The next 10 helical transmembrane spans lie at 4–26 (IFYA…KIGG), 33–50 (LGMT…WLIV), 55–72 (TLQL…WSIG), 85–107 (VSVA…GVLV), 117–134 (FVVG…FYFS), 154–171 (FRAL…AVLF), 181–200 (SVIL…FMSF), 207–229 (YVIK…LLAA), 234–256 (LAIA…ILFL), and 268–285 (VVTG…LGVV).

It belongs to the GRP transporter (TC 2.A.7.5) family.

Its subcellular location is the cell membrane. This chain is Putative sugar uptake protein M6_Spy1874, found in Streptococcus pyogenes serotype M6 (strain ATCC BAA-946 / MGAS10394).